Reading from the N-terminus, the 680-residue chain is DNA ligase (680 aa).

Residues aspartate 35–aspartate 39, serine 86–leucine 87, and glutamate 111 contribute to the NAD(+) site. Catalysis depends on lysine 113, which acts as the N6-AMP-lysine intermediate. NAD(+) is bound by residues arginine 134, glutamate 174, lysine 290, and lysine 314. Residues cysteine 408, cysteine 411, cysteine 427, and cysteine 433 each coordinate Zn(2+). A BRCT domain is found at valine 597 to glutamate 680.

The protein belongs to the NAD-dependent DNA ligase family. LigA subfamily. It depends on Mg(2+) as a cofactor. The cofactor is Mn(2+).

It carries out the reaction NAD(+) + (deoxyribonucleotide)n-3'-hydroxyl + 5'-phospho-(deoxyribonucleotide)m = (deoxyribonucleotide)n+m + AMP + beta-nicotinamide D-nucleotide.. In terms of biological role, DNA ligase that catalyzes the formation of phosphodiester linkages between 5'-phosphoryl and 3'-hydroxyl groups in double-stranded DNA using NAD as a coenzyme and as the energy source for the reaction. It is essential for DNA replication and repair of damaged DNA. This is DNA ligase from Corynebacterium glutamicum (strain R).